A 268-amino-acid polypeptide reads, in one-letter code: Secreted RxLR effector protein 5 (268 aa).

Positions 1 to 21 are cleaved as a signal peptide; the sequence is MRGAFYMAITLFLARSRSATA. Positions 48–63 match the RxLR-dEER motif; that stretch reads RYLRDGLALSAANEER. N-linked (GlcNAc...) asparagine glycosylation is present at Asn-104.

The protein belongs to the RxLR effector family.

It is found in the secreted. The protein localises to the host nucleus. Effector that acts as a broad suppressor of cell death to interrupt plant immunity. Inhibits cell death induced by cell death-inducing proteins, including the PAMP elicitor INF1 from P.infestans. The polypeptide is Secreted RxLR effector protein 5 (Plasmopara viticola (Downy mildew of grapevine)).